The following is a 347-amino-acid chain: uncharacterized protein (347 aa).

Transmembrane regions (helical) follow at residues 6–26 (GSAS…GFAT), 37–57 (FGWF…LLGA), 90–110 (FMLF…GALF), 114–134 (LGMS…IVMT), 140–160 (IFGV…IVVA), 182–202 (WLLS…AVLV), 217–237 (GALI…LSLS), 262–282 (LIYL…NLYG), 289–309 (SFLP…AYIT), and 317–337 (LIST…GALL).

It is found in the cell membrane. This is an uncharacterized protein from Bacillus subtilis (strain 168).